The sequence spans 175 residues: Interleukin-10 (175 aa).

The N-terminal stretch at 1-21 (MQTCCQALLLLLAACTLPAHC) is a signal peptide. Cystine bridges form between Cys26-Cys123 and Cys77-Cys129.

The protein belongs to the IL-10 family. As to quaternary structure, homodimer. Interacts with IL10RA and IL10RB. In terms of tissue distribution, expressed predominantly in bursa of Fabricius and cecal tonsils with low levels in thymus, liver and lung.

The protein localises to the secreted. Its function is as follows. Major immune regulatory cytokine that acts on many cells of the immune system where it has profound anti-inflammatory functions, limiting excessive tissue disruption caused by inflammation. Mechanistically, IL10 binds to its heterotetrameric receptor comprising IL10RA and IL10RB leading to JAK1 and STAT2-mediated phosphorylation of STAT3. In turn, STAT3 translocates to the nucleus where it drives expression of anti-inflammatory mediators. Targets antigen-presenting cells (APCs) such as macrophages and monocytes and inhibits their release of pro-inflammatory cytokines including granulocyte-macrophage colony-stimulating factor /GM-CSF, granulocyte colony-stimulating factor/G-CSF, IL-1 alpha, IL-1 beta, IL-6, IL-8 and TNF-alpha. Also interferes with antigen presentation by reducing the expression of MHC-class II and co-stimulatory molecules, thereby inhibiting their ability to induce T cell activation. In addition, controls the inflammatory response of macrophages by reprogramming essential metabolic pathways including mTOR signaling. This chain is Interleukin-10, found in Gallus gallus (Chicken).